The sequence spans 485 residues: Hemolysin (485 aa).

Residues 1 to 28 (MKNFKGRKFLTCVLVSLCTLNYSSISFA) form the signal peptide. A run of 4 beta stranded transmembrane segments spans residues 196-209 (KAQI…NAKY), 216-225 (IDFNAVANGE), 294-303 (SKDVQAAFKA), and 311-323 (ETSG…FEES). A Conserved undecapeptide motif is present at residues 465–475 (ECTGLAWEWWR).

It belongs to the cholesterol-dependent cytolysin family. In terms of assembly, homooligomeric pore complex of 35 to 50 subunits; when inserted in the host membrane.

The protein resides in the secreted. The protein localises to the host cell membrane. In terms of biological role, a cholesterol-dependent toxin with hemolytic activity against host red blood cells. Causes cytolysis by forming pores in cholesterol containing host membranes. binding to target membranes, the protein undergoes a major conformation change, leading to its insertion in the host membrane and formation of an oligomeric pore complex. Cholesterol is required for binding to host membranes, membrane insertion and pore formation; cholesterol binding is mediated by a Thr-Leu pair in the C-terminus. Can be reversibly inactivated by oxidation. The chain is Hemolysin from Bacillus cereus.